We begin with the raw amino-acid sequence, 442 residues long: tRNA modification GTPase MnmE (442 aa).

The (6S)-5-formyl-5,6,7,8-tetrahydrofolate site is built by Arg23, Glu82, and Lys121. The region spanning 217 to 363 is the TrmE-type G domain; it reads PFKIAIIGET…LVDLLTKYIN (147 aa). Asn227 is a K(+) binding site. GTP contacts are provided by residues 227–232, 246–252, and 271–274; these read NVGKSS, SNIKGST, and DTAG. Residue Ser231 participates in Mg(2+) binding. K(+) contacts are provided by Ser246, Ile248, and Ser251. Thr252 is a Mg(2+) binding site. Lys442 contacts (6S)-5-formyl-5,6,7,8-tetrahydrofolate.

Belongs to the TRAFAC class TrmE-Era-EngA-EngB-Septin-like GTPase superfamily. TrmE GTPase family. Homodimer. Heterotetramer of two MnmE and two MnmG subunits. K(+) serves as cofactor.

Its subcellular location is the cytoplasm. In terms of biological role, exhibits a very high intrinsic GTPase hydrolysis rate. Involved in the addition of a carboxymethylaminomethyl (cmnm) group at the wobble position (U34) of certain tRNAs, forming tRNA-cmnm(5)s(2)U34. This chain is tRNA modification GTPase MnmE, found in Mycoplasma genitalium (strain ATCC 33530 / DSM 19775 / NCTC 10195 / G37) (Mycoplasmoides genitalium).